A 182-amino-acid chain; its full sequence is UPF0397 protein BA_2640/GBAA_2640/BAS2460 (182 aa).

The next 5 membrane-spanning stretches (helical) occupy residues 9–29, 40–60, 71–91, 114–134, and 142–162; these read VVAI…GFSI, AILT…IGLI, WSIW…MGFI, ITGL…DIIV, and IVIQ…VLGL.

Belongs to the UPF0397 family.

Its subcellular location is the cell membrane. The protein is UPF0397 protein BA_2640/GBAA_2640/BAS2460 of Bacillus anthracis.